Here is a 359-residue protein sequence, read N- to C-terminus: 4-hydroxy-tetrahydrodipicolinate synthase, chloroplastic (359 aa).

Residues 1–33 (MSSSIIGRCHFVADSIEAAGTKRRTTRWRSPRA) constitute a chloroplast transit peptide. Pyruvate is bound at residue T102. The active-site Proton donor/acceptor is Y188. K216 acts as the Schiff-base intermediate with substrate in catalysis. I255 is a pyruvate binding site.

Belongs to the DapA family.

The protein resides in the plastid. It is found in the chloroplast. The enzyme catalyses L-aspartate 4-semialdehyde + pyruvate = (2S,4S)-4-hydroxy-2,3,4,5-tetrahydrodipicolinate + H2O + H(+). It functions in the pathway amino-acid biosynthesis; L-lysine biosynthesis via DAP pathway; (S)-tetrahydrodipicolinate from L-aspartate: step 3/4. Functionally, catalyzes the condensation of (S)-aspartate-beta-semialdehyde [(S)-ASA] and pyruvate to 4-hydroxy-tetrahydrodipicolinate (HTPA). This chain is 4-hydroxy-tetrahydrodipicolinate synthase, chloroplastic (DHPS1), found in Nicotiana tabacum (Common tobacco).